Consider the following 178-residue polypeptide: dCTP deaminase (178 aa).

Residues 99–104 (RSTWAR) and Asp115 each bind dCTP. Catalysis depends on Glu125, which acts as the Proton donor/acceptor. Tyr157 and Gln164 together coordinate dCTP.

It belongs to the dCTP deaminase family. As to quaternary structure, homotrimer.

It carries out the reaction dCTP + H2O + H(+) = dUTP + NH4(+). Its pathway is pyrimidine metabolism; dUMP biosynthesis; dUMP from dCTP (dUTP route): step 1/2. In terms of biological role, catalyzes the deamination of dCTP to dUTP. The polypeptide is dCTP deaminase (Aeropyrum pernix (strain ATCC 700893 / DSM 11879 / JCM 9820 / NBRC 100138 / K1)).